The primary structure comprises 389 residues: Chalcone synthase 1A (389 aa).

Cysteine 164 is a catalytic residue.

This sequence belongs to the thiolase-like superfamily. Chalcone/stilbene synthases family.

It catalyses the reaction (E)-4-coumaroyl-CoA + 3 malonyl-CoA + 3 H(+) = 2',4,4',6'-tetrahydroxychalcone + 3 CO2 + 4 CoA. It functions in the pathway secondary metabolite biosynthesis; flavonoid biosynthesis. Its function is as follows. The primary product of this enzyme is 4,2',4',6'-tetrahydroxychalcone (also termed naringenin-chalcone or chalcone) which can under specific conditions spontaneously isomerize into naringenin. This chain is Chalcone synthase 1A (CHS1A), found in Solanum tuberosum (Potato).